Reading from the N-terminus, the 532-residue chain is Phosphoenolpyruvate carboxylase (532 aa).

Belongs to the PEPCase type 2 family. As to quaternary structure, homotetramer. It depends on Mg(2+) as a cofactor.

The enzyme catalyses oxaloacetate + phosphate = phosphoenolpyruvate + hydrogencarbonate. In terms of biological role, catalyzes the irreversible beta-carboxylation of phosphoenolpyruvate (PEP) to form oxaloacetate (OAA), a four-carbon dicarboxylic acid source for the tricarboxylic acid cycle. The sequence is that of Phosphoenolpyruvate carboxylase from Methanopyrus kandleri (strain AV19 / DSM 6324 / JCM 9639 / NBRC 100938).